Here is a 340-residue protein sequence, read N- to C-terminus: L-threonine 3-dehydrogenase (340 aa).

Zn(2+) is bound at residue C38. Residues T40 and H43 each act as charge relay system in the active site. Zn(2+) contacts are provided by H63, E64, C93, C96, C99, and C107. NAD(+) is bound by residues I175, D195, R200, 261–263 (LGI), and 285–286 (IY).

Belongs to the zinc-containing alcohol dehydrogenase family. In terms of assembly, homotetramer. Requires Zn(2+) as cofactor.

It is found in the cytoplasm. It catalyses the reaction L-threonine + NAD(+) = (2S)-2-amino-3-oxobutanoate + NADH + H(+). It participates in amino-acid degradation; L-threonine degradation via oxydo-reductase pathway; glycine from L-threonine: step 1/2. In terms of biological role, catalyzes the NAD(+)-dependent oxidation of L-threonine to 2-amino-3-ketobutyrate. The chain is L-threonine 3-dehydrogenase from Stenotrophomonas maltophilia (strain K279a).